Reading from the N-terminus, the 425-residue chain is Cysteate synthase (425 aa).

Residue Lys-106 is modified to N6-(pyridoxal phosphate)lysine. Residues Asn-132 and Thr-382 each coordinate pyridoxal 5'-phosphate.

Belongs to the threonine synthase family. Cysteate synthase subfamily. As to quaternary structure, homotrimer. Requires pyridoxal 5'-phosphate as cofactor.

It carries out the reaction O-phospho-L-serine + sulfite + H(+) = L-cysteate + phosphate. It participates in cofactor biosynthesis; coenzyme M biosynthesis. Its function is as follows. Specifically catalyzes the beta-elimination of phosphate from L-phosphoserine and the beta-addition of sulfite to the dehydroalanine intermediate to produce L-cysteate. This is Cysteate synthase from Methanosphaerula palustris (strain ATCC BAA-1556 / DSM 19958 / E1-9c).